The primary structure comprises 478 residues: Proline--tRNA ligase (478 aa).

This sequence belongs to the class-II aminoacyl-tRNA synthetase family. ProS type 3 subfamily. In terms of assembly, homodimer.

The protein localises to the cytoplasm. It carries out the reaction tRNA(Pro) + L-proline + ATP = L-prolyl-tRNA(Pro) + AMP + diphosphate. Its function is as follows. Catalyzes the attachment of proline to tRNA(Pro) in a two-step reaction: proline is first activated by ATP to form Pro-AMP and then transferred to the acceptor end of tRNA(Pro). The polypeptide is Proline--tRNA ligase (Clostridium botulinum (strain 657 / Type Ba4)).